Reading from the N-terminus, the 185-residue chain is Ribosome-recycling factor (185 aa).

This sequence belongs to the RRF family.

It is found in the cytoplasm. Functionally, responsible for the release of ribosomes from messenger RNA at the termination of protein biosynthesis. May increase the efficiency of translation by recycling ribosomes from one round of translation to another. In Wolbachia pipientis wMel, this protein is Ribosome-recycling factor.